A 327-amino-acid polypeptide reads, in one-letter code: Protein-L-isoaspartate O-methyltransferase (327 aa).

Disordered stretches follow at residues 1–38 and 62–105; these read MSGE…DAAR and PRAA…KSAT. The span at 14–29 shows a compositional bias: basic and acidic residues; the sequence is EDLKREPRKPEGRAAE. Low complexity predominate over residues 62-77; sequence PRAAGASGSGVPVAKP. Polar residues predominate over residues 92 to 105; it reads APSSGVKNGDKSAT. Residue serine 175 is part of the active site.

The protein belongs to the methyltransferase superfamily. L-isoaspartyl/D-aspartyl protein methyltransferase family.

It localises to the cytoplasm. It carries out the reaction [protein]-L-isoaspartate + S-adenosyl-L-methionine = [protein]-L-isoaspartate alpha-methyl ester + S-adenosyl-L-homocysteine. Catalyzes the methyl esterification of L-isoaspartyl residues in peptides and proteins that result from spontaneous decomposition of normal L-aspartyl and L-asparaginyl residues. It plays a role in the repair and/or degradation of damaged proteins. The sequence is that of Protein-L-isoaspartate O-methyltransferase from Burkholderia thailandensis (strain ATCC 700388 / DSM 13276 / CCUG 48851 / CIP 106301 / E264).